We begin with the raw amino-acid sequence, 677 residues long: Methionine--tRNA ligase (677 aa).

The short motif at 15–25 (PYANGSIHLGH) is the 'HIGH' region element. Residues C146, C149, C159, and C162 each contribute to the Zn(2+) site. The 'KMSKS' region signature appears at 333 to 337 (KMSKS). K336 provides a ligand contact to ATP. The tRNA-binding domain maps to 575–677 (DFAKVDLRVA…DGAKPGQQVK (103 aa)).

It belongs to the class-I aminoacyl-tRNA synthetase family. MetG type 1 subfamily. In terms of assembly, homodimer. Zn(2+) serves as cofactor.

Its subcellular location is the cytoplasm. It catalyses the reaction tRNA(Met) + L-methionine + ATP = L-methionyl-tRNA(Met) + AMP + diphosphate. Is required not only for elongation of protein synthesis but also for the initiation of all mRNA translation through initiator tRNA(fMet) aminoacylation. The chain is Methionine--tRNA ligase from Klebsiella pneumoniae subsp. pneumoniae (strain ATCC 700721 / MGH 78578).